The primary structure comprises 195 residues: Molybdenum cofactor guanylyltransferase (195 aa).

GTP contacts are provided by residues 10–12 (LAG), K23, N51, D69, and D99. D99 lines the Mg(2+) pocket.

This sequence belongs to the MobA family. Monomer. The cofactor is Mg(2+).

The protein localises to the cytoplasm. It catalyses the reaction Mo-molybdopterin + GTP + H(+) = Mo-molybdopterin guanine dinucleotide + diphosphate. In terms of biological role, transfers a GMP moiety from GTP to Mo-molybdopterin (Mo-MPT) cofactor (Moco or molybdenum cofactor) to form Mo-molybdopterin guanine dinucleotide (Mo-MGD) cofactor. In Yersinia pseudotuberculosis serotype O:1b (strain IP 31758), this protein is Molybdenum cofactor guanylyltransferase.